The following is a 47-amino-acid chain: Photosystem II reaction center protein K (47 aa).

The propeptide occupies 1 to 10 (MAVYTLDLLA). A helical transmembrane segment spans residues 19–39 (FGPLIDILPIIPLFFLLLAFV).

Belongs to the PsbK family. PSII is composed of 1 copy each of membrane proteins PsbA, PsbB, PsbC, PsbD, PsbE, PsbF, PsbH, PsbI, PsbJ, PsbK, PsbL, PsbM, PsbT, PsbX, PsbY, PsbZ, Psb30/Ycf12, peripheral proteins PsbO, CyanoQ (PsbQ), PsbU, PsbV and a large number of cofactors. It forms dimeric complexes.

The protein localises to the cellular thylakoid membrane. Functionally, one of the components of the core complex of photosystem II (PSII). PSII is a light-driven water:plastoquinone oxidoreductase that uses light energy to abstract electrons from H(2)O, generating O(2) and a proton gradient subsequently used for ATP formation. It consists of a core antenna complex that captures photons, and an electron transfer chain that converts photonic excitation into a charge separation. This is Photosystem II reaction center protein K from Synechococcus sp. (strain CC9311).